We begin with the raw amino-acid sequence, 1588 residues long: Centrosomal protein of 170 kDa (1588 aa).

The FHA domain occupies 23 to 73 (IFVGRDDCELMLQSRSVDKQHAVINYDASMDEHLVKDLGSLNGTFVNDVRI). Disordered regions lie at residues 121–172 (LSQK…MPRG), 299–323 (KFTS…GIQT), 338–447 (QNNP…EEPS), and 461–508 (SGSL…NPNS). Serine 141 carries the post-translational modification Phosphoserine. Over residues 155 to 164 (EALKSEEKPM) the composition is skewed to basic and acidic residues. Basic and acidic residues predominate over residues 347 to 357 (ERTEEDSKSIK). 2 positions are modified to phosphoserine: serine 355 and serine 358. The residue at position 363 (tyrosine 363) is a Phosphotyrosine. Positions 407–418 (KKKAQSTEKHQE) are enriched in basic and acidic residues. Serine 443, serine 463, and serine 494 each carry phosphoserine. Threonine 498 is subject to Phosphothreonine. Residues serine 568, serine 577, serine 628, and serine 631 each carry the phosphoserine modification. The disordered stretch occupies residues 602–854 (ELSATVENET…PHINKQNSSV (253 aa)). A compositionally biased stretch (polar residues) spans 620–631 (LRSTSCTTSLAS). The residue at position 639 (threonine 639) is a Phosphothreonine. Residues 645–654 (NEEKLLESSR) are compositionally biased toward basic and acidic residues. Residue serine 662 is modified to Phosphoserine. Residues 663-691 (EIGEKQDTELQEKEAQVYQSEKHDADRGL) show a composition bias toward basic and acidic residues. The residue at position 718 (serine 718) is a Phosphoserine. Positions 720–731 (SKEKSETEKETS) are enriched in basic and acidic residues. At threonine 752 the chain carries Phosphothreonine. 2 stretches are compositionally biased toward basic and acidic residues: residues 764–774 (HIDKCREESSK) and 789–821 (SKGD…KESS). Positions 822–839 (KSLVRQGSFTIDKPSSNI) are enriched in polar residues. A phosphoserine mark is found at serine 829, serine 870, and serine 872. The targeting to microtubules stretch occupies residues 844-1588 (IPHINKQNSS…GEEEDVTVHE (745 aa)). A compositionally biased stretch (basic and acidic residues) spans 899 to 908 (LREDNNKTDE). Disordered stretches follow at residues 899–1222 (LRED…RWRR) and 1228–1247 (ASTS…HTRL). Threonine 906 and threonine 912 each carry phosphothreonine. The segment covering 913–937 (PSYNRDNSISPESDVDTASTISLVT) has biased composition (polar residues). Serine 922, serine 925, and serine 950 each carry phosphoserine. A compositionally biased stretch (basic and acidic residues) spans 967-980 (DVTKSGSREKIEKK). Position 1008 is a phosphoserine (serine 1008). The residue at position 1012 (threonine 1012) is a Phosphothreonine. Residues 1028–1038 (IMSSDQETYSC) are compositionally biased toward polar residues. A Phosphothreonine modification is found at threonine 1047. A Phosphoserine modification is found at serine 1048. The segment covering 1049 to 1062 (ADEHNIHSKLEGGK) has biased composition (basic and acidic residues). The span at 1075–1093 (STSKSTTLPRPRPTRTSLL) shows a compositional bias: low complexity. A phosphoserine mark is found at serine 1102, serine 1104, serine 1122, serine 1123, serine 1135, serine 1150, and serine 1155. Residues 1103 to 1588 (DSELADADKA…GEEEDVTVHE (486 aa)) form a targeting to centrosomes region. Residues 1112 to 1128 (ASVASEVSTTSSTSKPP) show a composition bias toward low complexity. Residues 1158–1173 (EATISRSSASARTAEA) are compositionally biased toward low complexity. 8 positions are modified to phosphoserine: serine 1188, serine 1195, serine 1200, serine 1229, serine 1231, serine 1241, serine 1260, and serine 1270. Residues 1191 to 1218 (TRANSISRLSDSKVKSMSSTHGSPSVNS) are compositionally biased toward polar residues. The disordered stretch occupies residues 1315 to 1334 (SVTSSGTAPSTTVSTAATTP). Residue serine 1362 is modified to Phosphoserine. Residues 1370–1398 (PLVHSKTPEGNNGRSVDSRPQPAEHPDHL) are disordered. Residues 1467 to 1495 (KTSSMEISSILQELKRVEKQLQVINAMID) adopt a coiled-coil conformation. Residues 1511–1540 (AILPSPPKQKSSPVNNHSSPSQTPALCPPE) are disordered. The span at 1518 to 1534 (KQKSSPVNNHSSPSQTP) shows a compositional bias: polar residues. Phosphoserine is present on residues serine 1521 and serine 1522.

It belongs to the CEP170 family. As to quaternary structure, interacts with CCDC68 and CCDC120; leading to recruitment to centrosomes. Interacts with PLK1. Interacts with NIN. Interacts with FHDC1. Interacts with CCDC61. Interacts with TBK1; efficient complex formation may be dependent on the presence of CCDC61. Phosphorylated; probably by PLK1.

It localises to the cytoplasm. The protein resides in the cytoskeleton. The protein localises to the microtubule organizing center. It is found in the centrosome. Its subcellular location is the centriole. It localises to the spindle. Functionally, plays a role in microtubule organization. Required for centriole subdistal appendage assembly. This Mus musculus (Mouse) protein is Centrosomal protein of 170 kDa (Cep170).